A 204-amino-acid polypeptide reads, in one-letter code: Inactive ribonuclease-like protein 9 (204 aa).

Residues 1-26 form the signal peptide; that stretch reads MMRTLITTHPLLLLLLLQQLLQPVQF. 3 cysteine pairs are disulfide-bonded: cysteine 97/cysteine 152, cysteine 115/cysteine 167, and cysteine 122/cysteine 129. N-linked (GlcNAc...) asparagine glycosylation is found at asparagine 130 and asparagine 142.

Belongs to the pancreatic ribonuclease family.

It localises to the secreted. In terms of biological role, does not exhibit any ribonuclease activity. The polypeptide is Inactive ribonuclease-like protein 9 (RNASE9) (Macaca mulatta (Rhesus macaque)).